We begin with the raw amino-acid sequence, 801 residues long: Na(+)/H(+) antiporter subunit A (801 aa).

21 helical membrane-spanning segments follow: residues 4–21 (LHLAILSPFLFAFIIPFL), 28–50 (VHTGWFVLILPVLLFIYFLPMIR), 80–102 (GLLFALLITGIGSLVTLYSIFYL), 109–128 (LGPFYVYLLMFMGAMLGVVL), 132–154 (VMVLYMFWELTSLSSFLLIGYWY), 166–188 (SLLITVSGGLCMLGGFILLYLIT), 203–222 (IAGHELFIPAMILILLGAFT), 229–251 (FYIWLPDAMEAPTPVSAYLHSAT), 266–288 (IFAFSAQWFWIVSLVGLFTMVWG), 301–323 (ILAFSTVSQLGMIISMLGVSAAA), 338–360 (AAIFHLINHATFKGSLFMAVGII), 372–394 (LGGLMAIMPITFTISLIGTFSMA), 428–450 (VLFPLFAWIGSVFTFIYSMKLLF), 471–493 (VGMLVPPVILVALAVSLFFFPNI), 526–548 (GVTTELLMTAGIVVIGTIGYLSL), 594–616 (YLLYIFAGFIILIGGAFAIKGGF), 626–647 (IGVYEIILTLVMISATVATVFA), 654–671 (IIALGVVGYTLALFFVIF), 676–698 (LALTQLVIETISVALFLLCFYHL), 710–732 (FRMTNFIISLGVGVIVTLLGIAS), and 772–789 (MFEITVLTIAALGIYSMI).

It belongs to the CPA3 antiporters (TC 2.A.63) subunit A family. As to quaternary structure, forms a heterooligomeric complex that consists of seven subunits: MrpA, MrpB, MrpC, MrpD, MrpE, MrpF and MrpG.

It localises to the cell membrane. Mrp complex is a Na(+)/H(+) antiporter that is considered to be the major Na(+) excretion system in B.subtilis. Has a major role in Na(+) resistance and a minor role in Na(+)- and K(+)-dependent pH homeostasis as compared to TetB. MrpA may be the actual Na(+)/H(+) antiporter, although the six other Mrp proteins are all required for Na(+)/H(+) antiport activity and Na(+) resistance. MrpA is required for initiation of sporulation when external Na(+) concentration increases. Also transports Li(+) but not K(+), Ca(2+) or Mg(2+). This chain is Na(+)/H(+) antiporter subunit A (mrpA), found in Bacillus subtilis (strain 168).